The primary structure comprises 147 residues: Large ribosomal subunit protein uL15 (147 aa).

Residues 1–11 (MKLHDLRPAKD) are compositionally biased toward basic and acidic residues. Residues 1-57 (MKLHDLRPAKDAKKKRKRVGRGTGSGRGFTSGRGSKGQNARSGGGVRPTFEGGQTPL) are disordered. Residues 21–35 (RGTGSGRGFTSGRGS) show a composition bias toward gly residues.

Belongs to the universal ribosomal protein uL15 family. Part of the 50S ribosomal subunit.

Binds to the 23S rRNA. This is Large ribosomal subunit protein uL15 from Halothermothrix orenii (strain H 168 / OCM 544 / DSM 9562).